Consider the following 245-residue polypeptide: Actin-like protein 10 (245 aa).

Belongs to the actin family.

In Homo sapiens (Human), this protein is Actin-like protein 10 (ACTL10).